Reading from the N-terminus, the 491-residue chain is Ketol-acid reductoisomerase (NADP(+)) (491 aa).

Positions alanine 15–serine 208 constitute a KARI N-terminal Rossmann domain. Residues cysteine 45–glutamine 48, arginine 68, arginine 76, serine 78, and aspartate 108–glutamine 110 each bind NADP(+). The active site involves histidine 132. Glycine 158 is an NADP(+) binding site. 2 KARI C-terminal knotted domains span residues serine 209 to glutamine 344 and tyrosine 345 to methionine 484. Aspartate 217, glutamate 221, glutamate 389, and glutamate 393 together coordinate Mg(2+). Serine 414 serves as a coordination point for substrate.

This sequence belongs to the ketol-acid reductoisomerase family. It depends on Mg(2+) as a cofactor.

The enzyme catalyses (2R)-2,3-dihydroxy-3-methylbutanoate + NADP(+) = (2S)-2-acetolactate + NADPH + H(+). It catalyses the reaction (2R,3R)-2,3-dihydroxy-3-methylpentanoate + NADP(+) = (S)-2-ethyl-2-hydroxy-3-oxobutanoate + NADPH + H(+). It functions in the pathway amino-acid biosynthesis; L-isoleucine biosynthesis; L-isoleucine from 2-oxobutanoate: step 2/4. The protein operates within amino-acid biosynthesis; L-valine biosynthesis; L-valine from pyruvate: step 2/4. In terms of biological role, involved in the biosynthesis of branched-chain amino acids (BCAA). Catalyzes an alkyl-migration followed by a ketol-acid reduction of (S)-2-acetolactate (S2AL) to yield (R)-2,3-dihydroxy-isovalerate. In the isomerase reaction, S2AL is rearranged via a Mg-dependent methyl migration to produce 3-hydroxy-3-methyl-2-ketobutyrate (HMKB). In the reductase reaction, this 2-ketoacid undergoes a metal-dependent reduction by NADPH to yield (R)-2,3-dihydroxy-isovalerate. The sequence is that of Ketol-acid reductoisomerase (NADP(+)) from Escherichia coli O7:K1 (strain IAI39 / ExPEC).